We begin with the raw amino-acid sequence, 326 residues long: Probable fructokinase-4 (326 aa).

Belongs to the carbohydrate kinase PfkB family.

It carries out the reaction D-fructose + ATP = D-fructose 6-phosphate + ADP + H(+). It functions in the pathway glycan biosynthesis; starch biosynthesis. May play an important role in maintaining the flux of carbon towards starch formation. This Arabidopsis thaliana (Mouse-ear cress) protein is Probable fructokinase-4.